The sequence spans 422 residues: Acyl-[acyl-carrier-protein] desaturase 6, chloroplastic (422 aa).

Residues 1–46 constitute a chloroplast transit peptide; it reads MAATATMAMPLANRLRCKPNTNSSSPSRTLFGRRVTMISSSRWMCR. Fe cation-binding residues include glutamate 154, glutamate 192, histidine 195, glutamate 245, glutamate 280, and histidine 283.

This sequence belongs to the fatty acid desaturase type 2 family. As to quaternary structure, homodimer. Fe(2+) serves as cofactor.

The protein localises to the plastid. The protein resides in the chloroplast. It participates in lipid metabolism; fatty acid metabolism. Functionally, introduces a cis double bond in the acyl chain of an acyl-[acyl-carrier protein]. The protein is Acyl-[acyl-carrier-protein] desaturase 6, chloroplastic of Oryza sativa subsp. indica (Rice).